Consider the following 787-residue polypeptide: Aconitate hydratase, mitochondrial (787 aa).

The transit peptide at 1–33 (MISTRLARAGALAPKSRLFLGTRAFATVGDSPL) directs the protein to the mitochondrion. Residues Gln104 and 197–199 (DSH) contribute to the substrate site. Residues Cys390, Cys453, and Cys456 each contribute to the [4Fe-4S] cluster site. Residues Arg479 and Arg484 each coordinate substrate. The disordered stretch occupies residues 529 to 559 (LQPPTGEGLPAKGYDPGRDTYQAPPADRSSV). Substrate is bound by residues Arg612 and 675–676 (SR).

The protein belongs to the aconitase/IPM isomerase family. The cofactor is [4Fe-4S] cluster.

The protein localises to the mitochondrion. It carries out the reaction citrate = D-threo-isocitrate. It catalyses the reaction (2R)-homocitrate = cis-homoaconitate + H2O. It functions in the pathway carbohydrate metabolism; tricarboxylic acid cycle; isocitrate from oxaloacetate: step 2/2. The protein operates within amino-acid biosynthesis; L-lysine biosynthesis via AAA pathway; L-alpha-aminoadipate from 2-oxoglutarate: step 2/5. Its function is as follows. Catalyzes the isomerization of citrate to isocitrate via cis-aconitate, a step in the citric acid cycle. Also catalyzes the reversible dehydration of (R)-homocitrate to cis-homoaconitate, a step in the alpha-aminoadipate pathway for lysine biosynthesis. This Aspergillus fumigatus (strain ATCC MYA-4609 / CBS 101355 / FGSC A1100 / Af293) (Neosartorya fumigata) protein is Aconitate hydratase, mitochondrial (acoA).